Reading from the N-terminus, the 103-residue chain is Histone H4, minor (103 aa).

The segment covering 1–12 (MAGGKGGKGMGK) has biased composition (gly residues). The interval 1–29 (MAGGKGGKGMGKVGAKRHSRKSNKASIEG) is disordered. 4 positions are modified to N6-acetyllysine: K5, K8, K12, and K16. Over residues 14–23 (GAKRHSRKSN) the composition is skewed to basic residues. A DNA-binding region spans residues 16–21 (KRHSRK).

This sequence belongs to the histone H4 family. As to quaternary structure, the nucleosome is a histone octamer containing two molecules each of H2A, H2B, H3 and H4 assembled in one H3-H4 heterotetramer and two H2A-H2B heterodimers. The octamer wraps approximately 147 bp of DNA.

It is found in the nucleus. Its subcellular location is the chromosome. In terms of biological role, core component of nucleosome. Nucleosomes wrap and compact DNA into chromatin, limiting DNA accessibility to the cellular machineries which require DNA as a template. Histones thereby play a central role in transcription regulation, DNA repair, DNA replication and chromosomal stability. DNA accessibility is regulated via a complex set of post-translational modifications of histones, also called histone code, and nucleosome remodeling. The polypeptide is Histone H4, minor (Tetrahymena pyriformis).